A 294-amino-acid chain; its full sequence is UPF0282 protein APE_0500.1 (294 aa).

This sequence belongs to the UPF0282 family.

The protein is UPF0282 protein APE_0500.1 of Aeropyrum pernix (strain ATCC 700893 / DSM 11879 / JCM 9820 / NBRC 100138 / K1).